The primary structure comprises 453 residues: V-type proton ATPase subunit B (453 aa).

Arginine 341 contributes to the ATP binding site.

This sequence belongs to the ATPase alpha/beta chains family. As to quaternary structure, V-ATPase is a heteromultimeric enzyme made up of two complexes: the ATP-hydrolytic V1 complex and the proton translocation V0 complex. The V1 complex consists of three catalytic AB heterodimers that form a heterohexamer, three peripheral stalks each consisting of EG heterodimers, one central rotor including subunits D and F, and the regulatory subunits C and H. The proton translocation complex V0 consists of the proton transport subunit a, a ring of proteolipid subunits c9c'', rotary subunit d, subunits e and f, and two accessory subunits.

In terms of biological role, non-catalytic subunit of the V1 complex of vacuolar(H+)-ATPase (V-ATPase), a multisubunit enzyme composed of a peripheral complex (V1) that hydrolyzes ATP and a membrane integral complex (V0) that translocates protons. V-ATPase is responsible for acidifying and maintaining the pH of intracellular compartments and in some cell types, is targeted to the plasma membrane, where it is responsible for acidifying the extracellular environment. Essential for the proper assembly and activity of V-ATPase. This Gallus gallus (Chicken) protein is V-type proton ATPase subunit B (ATP6V1B).